We begin with the raw amino-acid sequence, 252 residues long: Cell division protein ZapD (252 aa).

This sequence belongs to the ZapD family. As to quaternary structure, interacts with FtsZ.

Its subcellular location is the cytoplasm. Functionally, cell division factor that enhances FtsZ-ring assembly. Directly interacts with FtsZ and promotes bundling of FtsZ protofilaments, with a reduction in FtsZ GTPase activity. The protein is Cell division protein ZapD of Cupriavidus necator (strain ATCC 17699 / DSM 428 / KCTC 22496 / NCIMB 10442 / H16 / Stanier 337) (Ralstonia eutropha).